Here is a 553-residue protein sequence, read N- to C-terminus: Solute carrier family 45 member 3 (553 aa).

The next 11 helical transmembrane spans lie at 19-39 (LLIN…ITYV), 52-72 (FMTM…PLLG), 88-108 (FIWA…RAGW), 120-140 (LELA…QVCF), 161-181 (YSVY…LPAI), 198-218 (CLFG…LLVA), 275-295 (FVAE…YTDF), 323-343 (MGSL…LVMD), 353-373 (AVYL…CLSH), 382-402 (AALT…LASL), and 522-542 (AYMV…TQVV).

Belongs to the glycoside-pentoside-hexuronide (GPH) cation symporter transporter (TC 2.A.2) family.

It localises to the membrane. It catalyses the reaction sucrose(out) + H(+)(out) = sucrose(in) + H(+)(in). Proton-associated sucrose transporter. May be able to transport also glucose and fructose. This chain is Solute carrier family 45 member 3 (SLC45A3), found in Macaca fascicularis (Crab-eating macaque).